Reading from the N-terminus, the 282-residue chain is Pantothenate synthetase (282 aa).

31–38 (MGYLHEGH) provides a ligand contact to ATP. H38 functions as the Proton donor in the catalytic mechanism. Q62 is a binding site for (R)-pantoate. Residue Q62 coordinates beta-alanine. Position 148–151 (148–151 (GEKD)) interacts with ATP. Q154 contributes to the (R)-pantoate binding site. Residues V177 and 185 to 188 (YSSR) contribute to the ATP site.

This sequence belongs to the pantothenate synthetase family. As to quaternary structure, homodimer.

It is found in the cytoplasm. The catalysed reaction is (R)-pantoate + beta-alanine + ATP = (R)-pantothenate + AMP + diphosphate + H(+). Its pathway is cofactor biosynthesis; (R)-pantothenate biosynthesis; (R)-pantothenate from (R)-pantoate and beta-alanine: step 1/1. Its function is as follows. Catalyzes the condensation of pantoate with beta-alanine in an ATP-dependent reaction via a pantoyl-adenylate intermediate. This is Pantothenate synthetase from Aquifex aeolicus (strain VF5).